We begin with the raw amino-acid sequence, 206 residues long: Large ribosomal subunit protein eL13z (206 aa).

Positions 185 to 206 (TNKRHAGARAKRAAEAEKEEKK) are disordered. Basic residues predominate over residues 186-195 (NKRHAGARAK). Basic and acidic residues predominate over residues 196 to 206 (RAAEAEKEEKK).

The protein belongs to the eukaryotic ribosomal protein eL13 family.

The protein localises to the cytoplasm. The chain is Large ribosomal subunit protein eL13z (RPL13B) from Arabidopsis thaliana (Mouse-ear cress).